Here is a 309-residue protein sequence, read N- to C-terminus: tRNA uridine(34) hydroxylase (309 aa).

The 96-residue stretch at 137-232 folds into the Rhodanese domain; that stretch reads RGDEVVFFDG…YGEKYGDKGL (96 aa). The active-site Cysteine persulfide intermediate is the C192.

The protein belongs to the TrhO family.

The catalysed reaction is uridine(34) in tRNA + AH2 + O2 = 5-hydroxyuridine(34) in tRNA + A + H2O. Functionally, catalyzes oxygen-dependent 5-hydroxyuridine (ho5U) modification at position 34 in tRNAs. In Corynebacterium jeikeium (strain K411), this protein is tRNA uridine(34) hydroxylase.